The sequence spans 892 residues: Alanine--tRNA ligase (892 aa).

Positions 565, 569, 675, and 679 each coordinate Zn(2+). The interval 852 to 871 (MGGKGGGGRPDMAQAGGPEA) is disordered.

The protein belongs to the class-II aminoacyl-tRNA synthetase family. It depends on Zn(2+) as a cofactor.

It localises to the cytoplasm. The catalysed reaction is tRNA(Ala) + L-alanine + ATP = L-alanyl-tRNA(Ala) + AMP + diphosphate. Catalyzes the attachment of alanine to tRNA(Ala) in a two-step reaction: alanine is first activated by ATP to form Ala-AMP and then transferred to the acceptor end of tRNA(Ala). Also edits incorrectly charged Ser-tRNA(Ala) and Gly-tRNA(Ala) via its editing domain. In Parvibaculum lavamentivorans (strain DS-1 / DSM 13023 / NCIMB 13966), this protein is Alanine--tRNA ligase.